The primary structure comprises 206 residues: Small ribosomal subunit protein uS4 (206 aa).

Positions 96-158 (GRLDNVVYRM…AKKQSRIKAA (63 aa)) constitute an S4 RNA-binding domain.

This sequence belongs to the universal ribosomal protein uS4 family. As to quaternary structure, part of the 30S ribosomal subunit. Contacts protein S5. The interaction surface between S4 and S5 is involved in control of translational fidelity.

Its function is as follows. One of the primary rRNA binding proteins, it binds directly to 16S rRNA where it nucleates assembly of the body of the 30S subunit. With S5 and S12 plays an important role in translational accuracy. In Vibrio cholerae serotype O1 (strain ATCC 39541 / Classical Ogawa 395 / O395), this protein is Small ribosomal subunit protein uS4.